Here is a 252-residue protein sequence, read N- to C-terminus: Uridylate kinase (252 aa).

Residue 23 to 26 participates in ATP binding; it reads KLSG. Gly65 contacts UMP. Gly66 and Arg70 together coordinate ATP. Residues Asp85 and 146-153 each bind UMP; that span reads LGAPFFST. ATP contacts are provided by Thr173, Gln174, Tyr179, and Asp182.

Belongs to the UMP kinase family. As to quaternary structure, homohexamer.

It is found in the cytoplasm. It carries out the reaction UMP + ATP = UDP + ADP. It functions in the pathway pyrimidine metabolism; CTP biosynthesis via de novo pathway; UDP from UMP (UMPK route): step 1/1. Its activity is regulated as follows. Inhibited by UTP. Catalyzes the reversible phosphorylation of UMP to UDP. The protein is Uridylate kinase of Thermobifida fusca (strain YX).